A 388-amino-acid polypeptide reads, in one-letter code: 5-hydroxytryptamine receptor 4 (388 aa).

Over 1–19 (MDKLDANVSSKEGFGSVEK) the chain is Extracellular. N-linked (GlcNAc...) asparagine glycosylation occurs at Asn7. The chain crosses the membrane as a helical span at residues 20 to 44 (VVLLTFLSAVILMAILGNLLVMVAV). Residues 45 to 54 (CRDRQLRKIK) are Cytoplasmic-facing. A helical transmembrane segment spans residues 55 to 78 (TNYFIVSLAFADLLVSVLVMPFGA). Residues 79-92 (IELVQDIWVYGEMF) are Extracellular-facing. Residues 93–117 (CLVRTSLDVLLTTASIFHLCCISLD) traverse the membrane as a helical segment. Residues Cys93 and Cys184 are joined by a disulfide bond. Residue Asp100 participates in serotonin binding. Topologically, residues 118–133 (RYYAICCQPLVYRNKM) are cytoplasmic. A helical transmembrane segment spans residues 134-157 (TPLRIALMLGGCWVIPMFISFLPI). Over 158 to 188 (MQGWNNIGIVDLIEKRKFNQNSNSTYCVFMV) the chain is Extracellular. Residues 189-212 (NKPYAITCSVVAFYIPFLLMVLAY) form a helical membrane-spanning segment. At 213-257 (YRIYVTAKEHARQIQVLQRAGAPAEGRPQPADQHSTHRMRTETKA) the chain is on the cytoplasmic side. The helical transmembrane segment at 258–283 (AKTLCIIMGCFCLCWAPFFVTNIVDP) threads the bilayer. Asn279 contributes to the serotonin binding site. The Extracellular segment spans residues 284–290 (FIDYTVP). The chain crosses the membrane as a helical span at residues 291 to 314 (GQLWTAFLWLGYINSGLNPFLYAF). The Cytoplasmic segment spans residues 315–388 (LNKSFRRAFL…PLVAAQPIDT (74 aa)).

The protein belongs to the G-protein coupled receptor 1 family. In terms of assembly, interacts (via C-terminus 330-346 AA) with GRK5; this interaction is promoted by 5-HT (serotonin).

Its subcellular location is the cell membrane. It localises to the endosome membrane. Its function is as follows. G-protein coupled receptor for 5-hydroxytryptamine (serotonin), a biogenic hormone that functions as a neurotransmitter, a hormone and a mitogen. Ligand binding causes a conformation change that triggers signaling via guanine nucleotide-binding proteins (G proteins) and modulates the activity of downstream effectors. HTR4 is coupled to G(s) G alpha proteins and mediates activation of adenylate cyclase activity. The chain is 5-hydroxytryptamine receptor 4 (HTR4) from Cavia porcellus (Guinea pig).